The following is a 201-amino-acid chain: Probable molybdenum cofactor guanylyltransferase (201 aa).

GTP is bound by residues 6-8 (LAG), Lys-18, Asp-65, and Asp-97. Asp-97 contacts Mg(2+).

The protein belongs to the MobA family. Requires Mg(2+) as cofactor.

The protein resides in the cytoplasm. It carries out the reaction Mo-molybdopterin + GTP + H(+) = Mo-molybdopterin guanine dinucleotide + diphosphate. In terms of biological role, transfers a GMP moiety from GTP to Mo-molybdopterin (Mo-MPT) cofactor (Moco or molybdenum cofactor) to form Mo-molybdopterin guanine dinucleotide (Mo-MGD) cofactor. The protein is Probable molybdenum cofactor guanylyltransferase of Staphylococcus epidermidis (strain ATCC 35984 / DSM 28319 / BCRC 17069 / CCUG 31568 / BM 3577 / RP62A).